Here is a 102-residue protein sequence, read N- to C-terminus: Small ribosomal subunit protein uS10 (102 aa).

The protein belongs to the universal ribosomal protein uS10 family. As to quaternary structure, part of the 30S ribosomal subunit.

Involved in the binding of tRNA to the ribosomes. This chain is Small ribosomal subunit protein uS10, found in Clostridium botulinum (strain ATCC 19397 / Type A).